The primary structure comprises 104 residues: Large ribosomal subunit protein bL21 (104 aa).

The protein belongs to the bacterial ribosomal protein bL21 family. In terms of assembly, part of the 50S ribosomal subunit. Contacts protein L20.

In terms of biological role, this protein binds to 23S rRNA in the presence of protein L20. This Francisella tularensis subsp. holarctica (strain FTNF002-00 / FTA) protein is Large ribosomal subunit protein bL21.